Here is a 240-residue protein sequence, read N- to C-terminus: Small ribosomal subunit protein uS3 (240 aa).

The KH type-2 domain occupies 21–92 (LNEFFTRELA…TIVLYAERVQ (72 aa)). A phosphothreonine mark is found at T44 and T70. S97 bears the Phosphoserine mark. K106 is covalently cross-linked (Glycyl lysine isopeptide (Lys-Gly) (interchain with G-Cter in ubiquitin)). S129 is modified (phosphoserine). Glycyl lysine isopeptide (Lys-Gly) (interchain with G-Cter in ubiquitin) cross-links involve residues K132 and K141. R146 is subject to Omega-N-methylarginine; by SFM1. Residues K151, K200, and K212 each participate in a glycyl lysine isopeptide (Lys-Gly) (interchain with G-Cter in ubiquitin) cross-link. The segment at 212-240 (KEEEPILAPSVKDYRPAEETEAQAEPVEA) is disordered. S221 carries the post-translational modification Phosphoserine. Acidic residues predominate over residues 230-240 (ETEAQAEPVEA). Phosphothreonine is present on T231.

This sequence belongs to the universal ribosomal protein uS3 family. In terms of assembly, component of the small ribosomal subunit (SSU). Mature yeast ribosomes consist of a small (40S) and a large (60S) subunit. The 40S small subunit contains 1 molecule of ribosomal RNA (18S rRNA) and 33 different proteins (encoded by 57 genes). The large 60S subunit contains 3 rRNA molecules (25S, 5.8S and 5S rRNA) and 46 different proteins (encoded by 81 genes). Post-translationally, ubiquitinated at Lys-212 in response to stalled ribosomes. Ubiquitination leads to activation of the No-Go Decay (NGD) pathway and degradation of non-functional 18S rRNA: first monoubiquitinated at Lys-212 by MAG2, followed by formation of 'Lys-63'-linked polyubiquitin chains on monoubiquitin by HEL2 and RSP5.

The protein localises to the cytoplasm. In terms of biological role, component of the ribosome, a large ribonucleoprotein complex responsible for the synthesis of proteins in the cell. The small ribosomal subunit (SSU) binds messenger RNAs (mRNAs) and translates the encoded message by selecting cognate aminoacyl-transfer RNA (tRNA) molecules. The large subunit (LSU) contains the ribosomal catalytic site termed the peptidyl transferase center (PTC), which catalyzes the formation of peptide bonds, thereby polymerizing the amino acids delivered by tRNAs into a polypeptide chain. The nascent polypeptides leave the ribosome through a tunnel in the LSU and interact with protein factors that function in enzymatic processing, targeting, and the membrane insertion of nascent chains at the exit of the ribosomal tunnel. The polypeptide is Small ribosomal subunit protein uS3 (Saccharomyces cerevisiae (strain ATCC 204508 / S288c) (Baker's yeast)).